The primary structure comprises 291 residues: 4-hydroxy-tetrahydrodipicolinate synthase (291 aa).

Residue Thr42 coordinates pyruvate. Tyr129 functions as the Proton donor/acceptor in the catalytic mechanism. The Schiff-base intermediate with substrate role is filled by Lys157. Residue Ile198 participates in pyruvate binding.

Belongs to the DapA family. In terms of assembly, homotetramer; dimer of dimers.

The protein resides in the cytoplasm. It catalyses the reaction L-aspartate 4-semialdehyde + pyruvate = (2S,4S)-4-hydroxy-2,3,4,5-tetrahydrodipicolinate + H2O + H(+). It participates in amino-acid biosynthesis; L-lysine biosynthesis via DAP pathway; (S)-tetrahydrodipicolinate from L-aspartate: step 3/4. Functionally, catalyzes the condensation of (S)-aspartate-beta-semialdehyde [(S)-ASA] and pyruvate to 4-hydroxy-tetrahydrodipicolinate (HTPA). This is 4-hydroxy-tetrahydrodipicolinate synthase from Chlamydia pneumoniae (Chlamydophila pneumoniae).